The sequence spans 78 residues: Esculentin-2Vb (78 aa).

The first 22 residues, 1–22, serve as a signal peptide directing secretion; that stretch reads MFTMKKSLLLLFFLGTISLSLC. Residues 23 to 39 constitute a propeptide that is removed on maturation; that stretch reads EEERGADEEEGDGEKLM. Cysteine 72 and cysteine 78 are joined by a disulfide.

As to expression, expressed by the skin glands.

Its subcellular location is the secreted. In terms of biological role, antimicrobial peptide. The chain is Esculentin-2Vb from Odorrana versabilis (Chinese bamboo leaf odorous frog).